A 297-amino-acid polypeptide reads, in one-letter code: MLYQQISQNKRRTVILLFAFFVLLVVIGAAAGYLLADSYQLGAAFALIIGAIYAFSMIFQSTSLVMGMNKAKEITVNDAPDFFHIVEDMALVAQIPMPKVFIIDDPSLNAFATGSSPQNAAVAATTGLLKVMNREELEAVIGHEVSHIRNYDIRISTIAVALASAVTLISSIGGRMMWYSGGRRRDDDRNDNGFGAIMLIFSILSLILAPLAASLVQLAISRQREYLADASSVELTRNPEGMIRALQKLSNSQPMTHPVDDASAALYINEPRKKEKLSALFSTHPPIEDRIERLKHM.

2 helical membrane passes run Val14–Leu34 and Tyr39–Phe59. His143 is a Zn(2+) binding site. Glu144 is a catalytic residue. His147 provides a ligand contact to Zn(2+). 2 helical membrane-spanning segments follow: residues Ile158–Trp178 and Gly193–Ala213. Position 225 (Glu225) interacts with Zn(2+).

This sequence belongs to the peptidase M48B family. It depends on Zn(2+) as a cofactor.

The protein resides in the cell membrane. This Streptococcus equi subsp. zooepidemicus (strain MGCS10565) protein is Protease HtpX homolog.